A 981-amino-acid polypeptide reads, in one-letter code: Probable NAD kinase 2, chloroplastic (981 aa).

The calmodulin-binding stretch occupies residues 319–364 (APSAEQVQRFAEIVSDSAKKPIYLHSQEGISRTSAMVSRWKQYVTR). Disordered stretches follow at residues 369–413 (ATQN…DRTM) and 551–601 (TNGK…AERN). Composition is skewed to polar residues over residues 387-406 (TEQL…NGTP), 551-563 (TNGK…ASTS), and 581-596 (SDTS…GSQK).

This sequence belongs to the NAD kinase family.

The protein localises to the plastid. It localises to the chloroplast. The enzyme catalyses NAD(+) + ATP = ADP + NADP(+) + H(+). Its function is as follows. Involved in chlorophyll synthesis and chloroplast protection against oxidative damage. The sequence is that of Probable NAD kinase 2, chloroplastic from Oryza sativa subsp. japonica (Rice).